Reading from the N-terminus, the 313-residue chain is Biotin synthase (313 aa).

The Radical SAM core domain occupies 28-258 (NFGNDIELCS…LFPQARLRLS (231 aa)). 3 residues coordinate [4Fe-4S] cluster: Cys46, Cys50, and Cys53. [2Fe-2S] cluster is bound by residues Cys90, Cys121, Cys181, and Arg256.

It belongs to the radical SAM superfamily. Biotin synthase family. In terms of assembly, homodimer. [4Fe-4S] cluster is required as a cofactor. [2Fe-2S] cluster serves as cofactor.

It catalyses the reaction (4R,5S)-dethiobiotin + (sulfur carrier)-SH + 2 reduced [2Fe-2S]-[ferredoxin] + 2 S-adenosyl-L-methionine = (sulfur carrier)-H + biotin + 2 5'-deoxyadenosine + 2 L-methionine + 2 oxidized [2Fe-2S]-[ferredoxin]. It participates in cofactor biosynthesis; biotin biosynthesis; biotin from 7,8-diaminononanoate: step 2/2. In terms of biological role, catalyzes the conversion of dethiobiotin (DTB) to biotin by the insertion of a sulfur atom into dethiobiotin via a radical-based mechanism. The chain is Biotin synthase from Francisella tularensis subsp. mediasiatica (strain FSC147).